The following is a 653-amino-acid chain: MEKSGNHHHANESSENHDHKSEDHENKQHSDELHSSTPESQSESSEHSLVEVMEAVVDFIQTLSSEKDPLGEISPAVESFPEAVDSLVSKMESSGLGRDETEDSVFIDAVNRISKSVMRLRELKLDSTPVSSWLNRASSVQHRAVSLLDEEFRHLLDRSREEEKKNNNNNNHHDGSNSDHNNSSTNDSDRCVLQDHEEAEEESFHDFSPESISTLKKIAGAMISAGYEAECCMSYEMSRRHAFKEELTEVGFEGINVEDVQRIGWESLEGEIASWISIVRRCSTVLFPGELSLCNAVFPDQDHSSVRKRLFTGLVSAVTIRFLDFSGAVVLTKRSSEKLFKFLDMYETLRDLIPAVEQSDSDLIQEIKLAQTRLGEAAVTIFGELEKSIKSDNGRTPVPSGAVHPLTRYTMNYLKYACEYKETLDQVFQHYEANQTDNKPEPETKPRQQQREDDEEYKVSAFARQMIRVMELLDANLEIKSRLYRDPSLRFIFLMNNGRYILQKIKGSIEIRDLMGQSWTRKRSTELRQYHKSYQRETWGKVLQCMNQEGLQVNGKVSKPVLKERFKIFNAMFDEIHKTQSTWIVSDEQMQSELRVSISSLVIPAYRSFFGRYKQHLDSGKQTDKYVKYQPEDIESFIDDLFDGNPTSMARKR.

3 stretches are compositionally biased toward basic and acidic residues: residues 1–34 (MEKS…DELH), 159–177 (SREE…DGSN), and 438–451 (NKPE…QQQR). Disordered stretches follow at residues 1–50 (MEKS…HSLV), 159–190 (SREE…DSDR), and 432–456 (EANQ…DDEE).

The protein belongs to the EXO70 family. In terms of assembly, interacts with ROH1A. Binds directly to B1L. In terms of processing, phosphorylated. In terms of tissue distribution, expressed in anthers, pollen and root trichoblast cells.

The protein localises to the cytoplasm. Functionally, required for global plant growth and for male transmission. Involved in the regulation of tip growth of pollen tube. The protein is Exocyst complex component EXO70C1 of Arabidopsis thaliana (Mouse-ear cress).